The following is a 688-amino-acid chain: Eukaryotic translation initiation factor 3 subunit B (688 aa).

Residues 1–32 are disordered; the sequence is MAKKKGENYDSDGGDDQDYDEEPNFDDPEGFV. The segment covering 9–32 has biased composition (acidic residues); the sequence is YDSDGGDDQDYDEEPNFDDPEGFV. The region spanning 57–141 is the RRM domain; sequence NVIVVDNIPV…HTLLVNLFSD (85 aa). WD repeat units lie at residues 208–246, 247–287, 291–329, 332–367, 440–482, and 527–572; these read RDRFTETYVKWSPLGTYIVTFHKQGVVIWGGSNFTKINK, FPHS…EKRS, DGTSNMSMFRWSHDDKYVARMGDNAIHVYETSTFYLLDK, IKVQGIRNFSWSPTDNIIAYWMSEDLEAPARVTLLE, EVKE…EPTM, and GDHF…KRVN. Residues 613-642 adopt a coiled-coil conformation; sequence RIRMTRASKELLEKRAKLREQFVEYRTKRV.

Belongs to the eIF-3 subunit B family. In terms of assembly, component of the eukaryotic translation initiation factor 3 (eIF-3) complex.

The protein resides in the cytoplasm. Its function is as follows. RNA-binding component of the eukaryotic translation initiation factor 3 (eIF-3) complex, which is involved in protein synthesis of a specialized repertoire of mRNAs and, together with other initiation factors, stimulates binding of mRNA and methionyl-tRNAi to the 40S ribosome. The eIF-3 complex specifically targets and initiates translation of a subset of mRNAs involved in cell proliferation. The chain is Eukaryotic translation initiation factor 3 subunit B from Aedes aegypti (Yellowfever mosquito).